The following is an 87-amino-acid chain: U15-lycotoxin-Ls1h (87 aa).

A signal peptide spans 1 to 20 (MNSKIFAVLLLLGLLSCVLS). The WAP domain maps to 21 to 66 (DQYCPKSSITACKKMNTRNDCCKDDDCTGGSWCCATPCGNFCKYPT). Disulfide bonds link cysteine 24/cysteine 54, cysteine 32/cysteine 58, cysteine 41/cysteine 53, cysteine 42/cysteine 80, and cysteine 47/cysteine 62.

This sequence belongs to the venom protein 11 family. 01 (wap-1) subfamily. Contains 5 disulfide bonds. As to expression, expressed by the venom gland.

Its subcellular location is the secreted. Its function is as follows. Has antibacterial activity. This Lycosa singoriensis (Wolf spider) protein is U15-lycotoxin-Ls1h.